We begin with the raw amino-acid sequence, 400 residues long: Elongation factor Tu (400 aa).

The tr-type G domain occupies 10–208 (KPHVNVGTIG…AMDNYIPEPQ (199 aa)). The G1 stretch occupies residues 19 to 26 (GHIDHGKS). 19-26 (GHIDHGKS) lines the GTP pocket. Position 26 (serine 26) interacts with Mg(2+). Positions 60–64 (GITIN) are G2. The segment at 81-84 (DCPG) is G3. GTP-binding positions include 81–85 (DCPGH) and 136–139 (NKTD). Residues 136–139 (NKTD) are G4. The tract at residues 174–176 (SAL) is G5.

It belongs to the TRAFAC class translation factor GTPase superfamily. Classic translation factor GTPase family. EF-Tu/EF-1A subfamily. As to quaternary structure, monomer.

It is found in the cytoplasm. It catalyses the reaction GTP + H2O = GDP + phosphate + H(+). In terms of biological role, GTP hydrolase that promotes the GTP-dependent binding of aminoacyl-tRNA to the A-site of ribosomes during protein biosynthesis. The chain is Elongation factor Tu from Thermotoga petrophila (strain ATCC BAA-488 / DSM 13995 / JCM 10881 / RKU-1).